Consider the following 120-residue polypeptide: Large ribosomal subunit protein uL18 (120 aa).

It belongs to the universal ribosomal protein uL18 family. In terms of assembly, part of the 50S ribosomal subunit; part of the 5S rRNA/L5/L18/L25 subcomplex. Contacts the 5S and 23S rRNAs.

Its function is as follows. This is one of the proteins that bind and probably mediate the attachment of the 5S RNA into the large ribosomal subunit, where it forms part of the central protuberance. In Staphylococcus carnosus (strain TM300), this protein is Large ribosomal subunit protein uL18.